We begin with the raw amino-acid sequence, 251 residues long: Hydroxyacylglutathione hydrolase (251 aa).

His-53, His-55, Asp-57, His-58, His-110, Asp-127, and His-165 together coordinate Zn(2+).

It belongs to the metallo-beta-lactamase superfamily. Glyoxalase II family. Monomer. Zn(2+) is required as a cofactor.

The catalysed reaction is an S-(2-hydroxyacyl)glutathione + H2O = a 2-hydroxy carboxylate + glutathione + H(+). Its pathway is secondary metabolite metabolism; methylglyoxal degradation; (R)-lactate from methylglyoxal: step 2/2. Thiolesterase that catalyzes the hydrolysis of S-D-lactoyl-glutathione to form glutathione and D-lactic acid. The sequence is that of Hydroxyacylglutathione hydrolase from Shigella dysenteriae serotype 1 (strain Sd197).